The following is a 154-amino-acid chain: 3-dehydroquinate dehydratase (154 aa).

Residue Y22 is the Proton acceptor of the active site. Residues N73, H79, and D86 each contribute to the substrate site. H99 acts as the Proton donor in catalysis. Residues 100 to 101 (LS) and R110 contribute to the substrate site.

It belongs to the type-II 3-dehydroquinase family. In terms of assembly, homododecamer.

It carries out the reaction 3-dehydroquinate = 3-dehydroshikimate + H2O. The protein operates within metabolic intermediate biosynthesis; chorismate biosynthesis; chorismate from D-erythrose 4-phosphate and phosphoenolpyruvate: step 3/7. Functionally, catalyzes a trans-dehydration via an enolate intermediate. The chain is 3-dehydroquinate dehydratase from Carboxydothermus hydrogenoformans (strain ATCC BAA-161 / DSM 6008 / Z-2901).